The primary structure comprises 198 residues: Recombination protein RecR (198 aa).

A C4-type zinc finger spans residues 57–72 (CSICGNITEEDPCEIC). The region spanning 80 to 175 (SIILVVEEPK…TVTRLAHGLS (96 aa)) is the Toprim domain.

This sequence belongs to the RecR family.

Functionally, may play a role in DNA repair. It seems to be involved in an RecBC-independent recombinational process of DNA repair. It may act with RecF and RecO. In Enterococcus faecalis (strain ATCC 700802 / V583), this protein is Recombination protein RecR.